A 312-amino-acid polypeptide reads, in one-letter code: Putative HTH-type transcriptional regulatory protein TV0294 (312 aa).

In terms of domain architecture, HTH cro/C1-type spans 133-186 (LRERRNELNLSIGNISSYLGVSRRSVSLYENGSAATIDIFIRLRNILKADIVDH). The H-T-H motif DNA-binding region spans 144–163 (IGNISSYLGVSRRSVSLYEN).

The polypeptide is Putative HTH-type transcriptional regulatory protein TV0294 (Thermoplasma volcanium (strain ATCC 51530 / DSM 4299 / JCM 9571 / NBRC 15438 / GSS1)).